Consider the following 355-residue polypeptide: Methylthioribose-1-phosphate isomerase (355 aa).

Residues 50–52, Arg93, and Gln198 contribute to the substrate site; that span reads RGA. Asp239 (proton donor) is an active-site residue. Position 249–250 (249–250) interacts with substrate; the sequence is NK.

This sequence belongs to the eIF-2B alpha/beta/delta subunits family. MtnA subfamily. Homodimer.

It catalyses the reaction 5-(methylsulfanyl)-alpha-D-ribose 1-phosphate = 5-(methylsulfanyl)-D-ribulose 1-phosphate. It participates in amino-acid biosynthesis; L-methionine biosynthesis via salvage pathway; L-methionine from S-methyl-5-thio-alpha-D-ribose 1-phosphate: step 1/6. Catalyzes the interconversion of methylthioribose-1-phosphate (MTR-1-P) into methylthioribulose-1-phosphate (MTRu-1-P). The chain is Methylthioribose-1-phosphate isomerase from Geobacillus thermodenitrificans (strain NG80-2).